Here is a 318-residue protein sequence, read N- to C-terminus: Ribosomal RNA small subunit methyltransferase H (318 aa).

Residues glycine 37 to histidine 39, aspartate 56, tyrosine 83, aspartate 104, and glutamine 111 each bind S-adenosyl-L-methionine. The disordered stretch occupies residues glutamate 293 to glutamate 318.

The protein belongs to the methyltransferase superfamily. RsmH family.

It is found in the cytoplasm. The catalysed reaction is cytidine(1402) in 16S rRNA + S-adenosyl-L-methionine = N(4)-methylcytidine(1402) in 16S rRNA + S-adenosyl-L-homocysteine + H(+). Functionally, specifically methylates the N4 position of cytidine in position 1402 (C1402) of 16S rRNA. In Streptomyces avermitilis (strain ATCC 31267 / DSM 46492 / JCM 5070 / NBRC 14893 / NCIMB 12804 / NRRL 8165 / MA-4680), this protein is Ribosomal RNA small subunit methyltransferase H.